The following is a 1024-amino-acid chain: Multidrug resistance protein MdtC (1024 aa).

12 helical membrane passes run 12-32, 333-353, 360-380, 387-407, 435-455, 469-489, 528-548, 853-873, 875-895, 897-917, 953-973, and 984-1004; these read VATTLLTLAITLSGIIGFSLL, EVERSLVIAVALVILVVFIFL, LIPAVAVPVSLIGTFAAMYLC, LSLMALTIATGFVVDDAIVVL, VLSMSISLVAVFIPLLLMAGL, VAIGISLVISLTLTPMMCAWL, WVMVVLLSTIALNVWLYISIP, LWLIMAAIATVYIVLGILYES, VHPLTILSTLPSAGVGALLAL, LFDAPFSLIALIGIMLLIGIV, PIIMTTLAALFGALPLVLSSG, and ITIVGGLVVSQLLTLYTTPVI.

Belongs to the resistance-nodulation-cell division (RND) (TC 2.A.6) family. MdtC subfamily. Part of a tripartite efflux system composed of MdtA, MdtB and MdtC. MdtC forms a heteromultimer with MdtB.

It localises to the cell inner membrane. This Yersinia pestis bv. Antiqua (strain Antiqua) protein is Multidrug resistance protein MdtC.